The following is a 742-amino-acid chain: Polyribonucleotide nucleotidyltransferase (742 aa).

Residues Asp515 and Asp521 each coordinate Mg(2+). Positions 581–640 (PRIITITIPVDKIGEVIGPKGKIINQIQDDTGASISIEDDGTIYIGATNGEAAEAAKNAV) constitute a KH domain. Residues 652–724 (GERYLGTVVK…DRGKLSLVPV (73 aa)) enclose the S1 motif domain.

It belongs to the polyribonucleotide nucleotidyltransferase family. Mg(2+) is required as a cofactor.

It is found in the cytoplasm. It catalyses the reaction RNA(n+1) + phosphate = RNA(n) + a ribonucleoside 5'-diphosphate. In terms of biological role, involved in mRNA degradation. Catalyzes the phosphorolysis of single-stranded polyribonucleotides processively in the 3'- to 5'-direction. The polypeptide is Polyribonucleotide nucleotidyltransferase (Nocardioides sp. (strain ATCC BAA-499 / JS614)).